The primary structure comprises 342 residues: N-acetyl-gamma-glutamyl-phosphate reductase (342 aa).

Residue C156 is part of the active site.

This sequence belongs to the NAGSA dehydrogenase family. Type 1 subfamily.

The protein localises to the cytoplasm. It catalyses the reaction N-acetyl-L-glutamate 5-semialdehyde + phosphate + NADP(+) = N-acetyl-L-glutamyl 5-phosphate + NADPH + H(+). The protein operates within amino-acid biosynthesis; L-arginine biosynthesis; N(2)-acetyl-L-ornithine from L-glutamate: step 3/4. Functionally, catalyzes the NADPH-dependent reduction of N-acetyl-5-glutamyl phosphate to yield N-acetyl-L-glutamate 5-semialdehyde. This Pseudoalteromonas atlantica (strain T6c / ATCC BAA-1087) protein is N-acetyl-gamma-glutamyl-phosphate reductase.